Consider the following 557-residue polypeptide: Dihydroxy-acid dehydratase (557 aa).

Residue Cys-47 participates in [2Fe-2S] cluster binding. Asp-79 provides a ligand contact to Mg(2+). Cys-120 is a [2Fe-2S] cluster binding site. Positions 121 and 122 each coordinate Mg(2+). Lys-122 bears the N6-carboxylysine mark. Residue Cys-192 coordinates [2Fe-2S] cluster. Position 444 (Glu-444) interacts with Mg(2+). Ser-470 serves as the catalytic Proton acceptor.

This sequence belongs to the IlvD/Edd family. In terms of assembly, homodimer. [2Fe-2S] cluster is required as a cofactor. Mg(2+) serves as cofactor.

It carries out the reaction (2R)-2,3-dihydroxy-3-methylbutanoate = 3-methyl-2-oxobutanoate + H2O. The enzyme catalyses (2R,3R)-2,3-dihydroxy-3-methylpentanoate = (S)-3-methyl-2-oxopentanoate + H2O. The protein operates within amino-acid biosynthesis; L-isoleucine biosynthesis; L-isoleucine from 2-oxobutanoate: step 3/4. It participates in amino-acid biosynthesis; L-valine biosynthesis; L-valine from pyruvate: step 3/4. In terms of biological role, functions in the biosynthesis of branched-chain amino acids. Catalyzes the dehydration of (2R,3R)-2,3-dihydroxy-3-methylpentanoate (2,3-dihydroxy-3-methylvalerate) into 2-oxo-3-methylpentanoate (2-oxo-3-methylvalerate) and of (2R)-2,3-dihydroxy-3-methylbutanoate (2,3-dihydroxyisovalerate) into 2-oxo-3-methylbutanoate (2-oxoisovalerate), the penultimate precursor to L-isoleucine and L-valine, respectively. The sequence is that of Dihydroxy-acid dehydratase from Synechococcus sp. (strain CC9605).